The sequence spans 97 residues: Putative pterin-4-alpha-carbinolamine dehydratase (97 aa).

Belongs to the pterin-4-alpha-carbinolamine dehydratase family.

It carries out the reaction (4aS,6R)-4a-hydroxy-L-erythro-5,6,7,8-tetrahydrobiopterin = (6R)-L-erythro-6,7-dihydrobiopterin + H2O. The polypeptide is Putative pterin-4-alpha-carbinolamine dehydratase (Dinoroseobacter shibae (strain DSM 16493 / NCIMB 14021 / DFL 12)).